The following is a 385-amino-acid chain: Trans-enoyl reductase poxH (385 aa).

64–67 (QPYS) contacts NADP(+). Residue 156–163 (PDPAAPPI) coordinates substrate. Residues 199–202 (STSV), 223–226 (SGTD), Tyr-241, and 289–290 (LG) contribute to the NADP(+) site. Residue 309–313 (HMAPL) participates in substrate binding. 372–373 (KR) is a binding site for NADP(+).

The protein belongs to the zinc-containing alcohol dehydrogenase family. In terms of assembly, monomer.

It participates in secondary metabolite biosynthesis. In terms of biological role, trans-enoyl reductase; part of the gene cluster that mediates the biosynthesis of oxaleimides, cytotoxic compounds containing an unusual disubstituted succinimide moiety. The first step of the pathway is provided by the HR-PKS poxF that serves in a new mode of collaborative biosynthesis with the PKS-NRPS poxE, by providing the olefin containing amino acid substrate via the synthesis of an ACP-bound dec-4-enoate. The cytochrome P450 monooxygenase poxM-catalyzed oxidation at the alpha-position creates the enzyme-bound 2-hydroxydec-4-enoyl-ACP thioester, which may be prone to spontaneous hydrolysis to yield 2-hydroxydec-4-enoic acid due to increased electrophilicity of the carbonyl. 2-hydroxydec-4-enoic acid can then be further oxidized by poxM to yield the alpha-ketoacid 2-oxodec-4-enoicacid, which is reductively aminated by the aminotransferase poxL to yield (S,E)-2-aminodec-4-enoic acid. The Hybrid PKS-NRPS synthetase poxE then performs condensation between the octaketide product of its PKS modules and the amino group of (S,E)-2-aminodec-4-enoic acid which is activated and incorporated by the adenylation domain. The resulting aminoacyl product can be cyclized by the Diels-Alderase PoxQ and reductively released by the reductive (R) domain of poxE to yield an aldehyde intermediate. The released aldehyde is then substrate for a Knoevenagel condensation by the hydrolyase poxO followed by an oxidation at the 5-position of the pyrrolidone ring. The presence of the olefin from the amino acid building block allows for migration of the substituted allyl group to occur. This allylic transposition reaction takes place in a conjugate addition, semipinacol-like fashion to yield a succinimide intermediate. Iterative two-electron oxidations of the C7 methyl of the succinimide intermediate to the carboxylic acid can be catalyzed by one of two remaining cytochrome P450 monooxygenasess poxC or poxD to yield oxaleimide A. Subsequent oxidation yields the maleimide scaffold oxaleimide I. Both oxaleimide A and oxaleimide I can undergo oxidative modifications in the decalin ring to yield the series of products oxaleimides B to H. The sequence is that of Trans-enoyl reductase poxH from Penicillium oxalicum.